A 230-amino-acid polypeptide reads, in one-letter code: Sugar fermentation stimulation protein homolog (230 aa).

Belongs to the SfsA family.

The polypeptide is Sugar fermentation stimulation protein homolog (Clostridium perfringens (strain SM101 / Type A)).